The following is a 79-amino-acid chain: MEVFEEVRDVVVEQLSVAPDAVKIDSKIIEDLGADSLDVVELVMALEEKFGIEIPDSEAEKLISIKDVVTYIENLNKNK.

The region spanning 1–76 is the Carrier domain; sequence MEVFEEVRDV…DVVTYIENLN (76 aa). The residue at position 36 (Ser-36) is an O-(pantetheine 4'-phosphoryl)serine.

It belongs to the acyl carrier protein (ACP) family. 4'-phosphopantetheine is transferred from CoA to a specific serine of apo-ACP by AcpS. This modification is essential for activity because fatty acids are bound in thioester linkage to the sulfhydryl of the prosthetic group.

Its subcellular location is the cytoplasm. It functions in the pathway lipid metabolism; fatty acid biosynthesis. In terms of biological role, carrier of the growing fatty acid chain in fatty acid biosynthesis. This Campylobacter hominis (strain ATCC BAA-381 / DSM 21671 / CCUG 45161 / LMG 19568 / NCTC 13146 / CH001A) protein is Acyl carrier protein.